The primary structure comprises 315 residues: Ribosomal RNA small subunit methyltransferase H (315 aa).

S-adenosyl-L-methionine is bound by residues 33–35 (GGH), Asp52, Phe84, Asp106, and Gln113. The tract at residues 295-315 (SDELEENNRSHSAKLRVAEKL) is disordered.

This sequence belongs to the methyltransferase superfamily. RsmH family.

It is found in the cytoplasm. The catalysed reaction is cytidine(1402) in 16S rRNA + S-adenosyl-L-methionine = N(4)-methylcytidine(1402) in 16S rRNA + S-adenosyl-L-homocysteine + H(+). Its function is as follows. Specifically methylates the N4 position of cytidine in position 1402 (C1402) of 16S rRNA. The polypeptide is Ribosomal RNA small subunit methyltransferase H (Lactobacillus gasseri (strain ATCC 33323 / DSM 20243 / BCRC 14619 / CIP 102991 / JCM 1131 / KCTC 3163 / NCIMB 11718 / NCTC 13722 / AM63)).